Reading from the N-terminus, the 1009-residue chain is Rho GTPase-activating protein gacT (1009 aa).

Disordered regions lie at residues 1–72 and 89–117; these read MKNI…SRNH and TSHH…QQTQ. Over residues 12–23 the composition is skewed to basic and acidic residues; it reads FHKDKKEGDKQD. Over residues 26-35 the composition is skewed to low complexity; that stretch reads GSSGSSGNSG. Positions 58–69 are enriched in polar residues; the sequence is ESYSGDNSPTLS. The span at 89 to 103 shows a compositional bias: basic residues; sequence TSHHSHSHNHNHNHN. Over residues 104 to 117 the composition is skewed to low complexity; sequence HQLTQPIQQQQQTQ. Positions 163 to 351 constitute a Rho-GAP domain; sequence VPLTQVPCRA…EVFPQHHLYY (189 aa). Disordered stretches follow at residues 388–420, 432–482, and 508–571; these read TISG…DSTA, PEQQ…TFRV, and GPSG…TTDQ. Low complexity-rich tracts occupy residues 394-415, 432-468, and 512-521; these read PSNG…ITSP, PEQQ…QPIS, and TTGTTPNGGS. A compositionally biased stretch (gly residues) spans 522–546; sequence LSIGGGNGGNGGSSLSVGSGGGNGG. Over residues 547-557 the composition is skewed to low complexity; sequence SSLSVGSNTSV. A coiled-coil region spans residues 580–656; that stretch reads AYTNNEDTKA…IEREIEKKRL (77 aa). Residues 686–713 form a disordered region; that stretch reads ISTIDGSGGSNRNSKNYGNGSSSSSNRR. Residues 695 to 713 show a composition bias toward low complexity; sequence SNRNSKNYGNGSSSSSNRR. Residues 715–743 are a coiled coil; the sequence is SNTINQQLQMQLQQLQIQQQQYQQTQQSQ. The interval 759-781 is disordered; sequence TTTTTTTSSGSNRFSSNRYKPVD. Polar residues predominate over residues 766-781; the sequence is SSGSNRFSSNRYKPVD. A coiled-coil region spans residues 839-952; it reads ENLVLLQQQY…IEEIHLLETY (114 aa). A disordered region spans residues 965–1009; sequence STTKDLLTRSRSPTLPSSINMSTSSLGSSSSSAYNNNNNNNNVPK. Polar residues predominate over residues 967-980; it reads TKDLLTRSRSPTLP. Over residues 981-1009 the composition is skewed to low complexity; it reads SSINMSTSSLGSSSSSAYNNNNNNNNVPK.

It is found in the cytoplasm. Functionally, rho GTPase-activating protein involved in the signal transduction pathway. This is Rho GTPase-activating protein gacT (gacT) from Dictyostelium discoideum (Social amoeba).